The chain runs to 648 residues: Threonine--tRNA ligase (648 aa).

Residues 1-61 (MINITFPDGA…DTDGSIEIVT (61 aa)) enclose the TGS domain. The segment at 242–540 (DHRKLGKELD…LIETYKGAFP (299 aa)) is catalytic. 3 residues coordinate Zn(2+): C336, H387, and H517.

It belongs to the class-II aminoacyl-tRNA synthetase family. In terms of assembly, homodimer. It depends on Zn(2+) as a cofactor.

The protein resides in the cytoplasm. The catalysed reaction is tRNA(Thr) + L-threonine + ATP = L-threonyl-tRNA(Thr) + AMP + diphosphate + H(+). Its function is as follows. Catalyzes the attachment of threonine to tRNA(Thr) in a two-step reaction: L-threonine is first activated by ATP to form Thr-AMP and then transferred to the acceptor end of tRNA(Thr). Also edits incorrectly charged L-seryl-tRNA(Thr). The polypeptide is Threonine--tRNA ligase (Streptococcus uberis (strain ATCC BAA-854 / 0140J)).